A 345-amino-acid polypeptide reads, in one-letter code: Phosphoribosylformylglycinamidine cyclo-ligase (345 aa).

It belongs to the AIR synthase family.

It localises to the cytoplasm. The enzyme catalyses 2-formamido-N(1)-(5-O-phospho-beta-D-ribosyl)acetamidine + ATP = 5-amino-1-(5-phospho-beta-D-ribosyl)imidazole + ADP + phosphate + H(+). The protein operates within purine metabolism; IMP biosynthesis via de novo pathway; 5-amino-1-(5-phospho-D-ribosyl)imidazole from N(2)-formyl-N(1)-(5-phospho-D-ribosyl)glycinamide: step 2/2. This is Phosphoribosylformylglycinamidine cyclo-ligase from Prochlorococcus marinus (strain MIT 9211).